A 331-amino-acid chain; its full sequence is Gamma-parvin (331 aa).

Position 1 is an N-acetylmethionine (Met-1). Positions 17–39 (EPPAEEELSKGGKKKYLPPTSRK) are disordered. Calponin-homology (CH) domains follow at residues 44-151 (EELQ…KRFQ) and 210-317 (NAVK…CKHT).

The protein belongs to the parvin family. As to quaternary structure, interacts with ILK; the interaction promotes the establishment of cell polarity required for leukocyte migration. Interacts with ARHGEF6; the guanine nucleotide exchange factor activity of ARHGEF6 is essential for the PARVG-induced enhancement of cell spreading. In terms of tissue distribution, expressed predominantly in lymphoid organs, including spleen, thymus, lymph node, bone marrow and peripheral blood leukocytes and moderately in the digestive tract, including stomach, duodenum, jejunum, ileum, ileocecum and appendix, as well as in lung and liver. Also expressed in tumors, but at a lower level than in the corresponding normal tissues.

The protein localises to the cell junction. The protein resides in the focal adhesion. It is found in the cell membrane. It localises to the cytoplasm. Its subcellular location is the cytoskeleton. Plays a role with ILK in promoting the cell adhesion and spreading of leukocytes. In Homo sapiens (Human), this protein is Gamma-parvin (PARVG).